The following is a 1075-amino-acid chain: MPKRTDIKSILILGAGPIVIGQACEFDYSGAQACKALREEGYRVILVNSNPATIMTDPEMADATYIEPIHWEVVRKIIEKERPDAVLPTMGGQTALNCALELERQGVLEEFGVTMIGATADAIDKAEDRRRFDIAMKKIGLDTARSGIAHTMEEALAVAADVGFPCIIRPSFTMGGTGGGIAYNREEFEEICERGLDLSPTNELLIDESLIGWKEYEMEVVRDKNDNCIIVCSIENFDAMGIHTGDSITVAPAQTLTDKEYQIMRNASMAVLREIGVETGGSNVQFAVNPKNGRLIVIEMNPRVSRSSALASKATGFPIAKVAAKLAVGYTLDELMNDITGGRTPASFEPSIDYVVTKIPRFNFEKFAGANDRLTTQMKSVGEVMAIGRTQQESLQKALRGLEVGATGFDPKVSLDDPEALTKIRRELKDAGADRIWYIADAFRAGLSVDGVFNLTNIDRWFLVQIEELVRLEEKVAEVGITGLNADFLRQLKRKGFADARLAKLAGVREAEIRKLRDQYDLHPVYKRVDTCAAEFATDTAYMYSTYEDECEANPSIDRDKIMVLGGGPNRIGQGIEFDYCCVHASLALREDGYETIMVNCNPETVSTDYDTSDRLYFEPVTLEDVLEIVRIEKPKGVIVQYGGQTPLKLARALEAAGVPVIGTSPDAIDRAEDRERFQHAVDRLKLKQPANATVTAIEQAVEKAKEIGYPLVVRPSYVLGGRAMEIVYDEADLRRYFQTAVSVSNDAPVLLDRFLDDAVEVDVDAICDGEMVLIGGIMEHIEQAGVHSGDSACSLPAYTLSQEIQDVMRQQVQKLAFELQVRGLMNVQFAVKDNEVYLIEVNPRAARTVPFVSKATGVPLAKVAARVMAGKSLTEQGVTQEIIPPYYSVKEVVLPFNKFPGVDPLLGPEMRSTGEVMGVGRTFAEAFAKAQLGSNSTMKKQGRALLSVREGDKERVVDLAAKLLKQGFELDATHGTAIVLGEAGINPRLVNKVHEGRPHIQDRIKNGEYTYIINTTAGRRAIEDSRVIRRSALQYKVHYDTTLNGGFATTMALNADATEKVTSVQEMHAQIKKS.

Residues proline 2–glutamate 403 are carboxyphosphate synthetic domain. Arginine 129, arginine 169, glycine 175, glycine 176, glutamate 208, leucine 210, glutamate 215, glycine 241, isoleucine 242, histidine 243, glutamine 285, and glutamate 299 together coordinate ATP. In terms of domain architecture, ATP-grasp 1 spans aspartate 133–valine 328. Mg(2+) contacts are provided by glutamine 285, glutamate 299, and asparagine 301. Mn(2+) is bound by residues glutamine 285, glutamate 299, and asparagine 301. The oligomerization domain stretch occupies residues valine 404–alanine 553. Positions asparagine 554–asparagine 936 are carbamoyl phosphate synthetic domain. In terms of domain architecture, ATP-grasp 2 spans glutamine 679 to alanine 870. Arginine 715, arginine 754, leucine 756, glutamate 761, glycine 786, valine 787, histidine 788, serine 789, glutamine 829, and glutamate 841 together coordinate ATP. Mg(2+) contacts are provided by glutamine 829, glutamate 841, and asparagine 843. Residues glutamine 829, glutamate 841, and asparagine 843 each contribute to the Mn(2+) site. An MGS-like domain is found at serine 937 to serine 1075. Residues serine 937–serine 1075 are allosteric domain.

It belongs to the CarB family. As to quaternary structure, composed of two chains; the small (or glutamine) chain promotes the hydrolysis of glutamine to ammonia, which is used by the large (or ammonia) chain to synthesize carbamoyl phosphate. Tetramer of heterodimers (alpha,beta)4. It depends on Mg(2+) as a cofactor. Mn(2+) serves as cofactor.

It catalyses the reaction hydrogencarbonate + L-glutamine + 2 ATP + H2O = carbamoyl phosphate + L-glutamate + 2 ADP + phosphate + 2 H(+). It carries out the reaction hydrogencarbonate + NH4(+) + 2 ATP = carbamoyl phosphate + 2 ADP + phosphate + 2 H(+). It functions in the pathway amino-acid biosynthesis; L-arginine biosynthesis; carbamoyl phosphate from bicarbonate: step 1/1. It participates in pyrimidine metabolism; UMP biosynthesis via de novo pathway; (S)-dihydroorotate from bicarbonate: step 1/3. Its function is as follows. Large subunit of the glutamine-dependent carbamoyl phosphate synthetase (CPSase). CPSase catalyzes the formation of carbamoyl phosphate from the ammonia moiety of glutamine, carbonate, and phosphate donated by ATP, constituting the first step of 2 biosynthetic pathways, one leading to arginine and/or urea and the other to pyrimidine nucleotides. The large subunit (synthetase) binds the substrates ammonia (free or transferred from glutamine from the small subunit), hydrogencarbonate and ATP and carries out an ATP-coupled ligase reaction, activating hydrogencarbonate by forming carboxy phosphate which reacts with ammonia to form carbamoyl phosphate. This Salmonella typhimurium (strain LT2 / SGSC1412 / ATCC 700720) protein is Carbamoyl phosphate synthase large chain.